The primary structure comprises 426 residues: Coiled-coil domain-containing protein 86 (426 aa).

The disordered stretch occupies residues 1-426 (MDTPLRRSRR…QPPQRPVAKV (426 aa)). S18 bears the Phosphoserine mark. The segment covering 33–49 (ALVDFKSNSEETGELKS) has biased composition (basic and acidic residues). Pro residues predominate over residues 55–145 (LSLPSPGPQP…SLPSPGPQPE (91 aa)). At S59 the chain carries Phosphoserine. T66 is modified (phosphothreonine). S67, S70, S161, S172, S183, S191, S194, S225, S252, S253, and S283 each carry phosphoserine. A compositionally biased stretch (polar residues) spans 241-255 (QPAQELTVQAPSSPE). The segment covering 304-320 (GKPKSGRVWKDRSKKRF) has biased composition (basic residues). Residues 339-383 (ERQERKLAKDFARHLEEEKQRRRQEKKERRAENLRRRLENERKAE) show a composition bias toward basic and acidic residues. Residues 346-389 (AKDFARHLEEEKQRRRQEKKERRAENLRRRLENERKAEIVQVIR) are a coiled coil. Positions 392-402 (AKLKKAKKKQL) are enriched in basic residues. R408 carries the post-translational modification Citrulline.

Post-translationally, citrullinated by PADI4. As to expression, highly expressed in testis. Also expressed in heart, liver, kidney.

The protein localises to the nucleus. The protein resides in the chromosome. It is found in the nucleolus. Functionally, required for proper chromosome segregation during mitosis and error-free mitotic progression. The polypeptide is Coiled-coil domain-containing protein 86 (Mus musculus (Mouse)).